Here is a 330-residue protein sequence, read N- to C-terminus: Polyprenyl transferase dpfgC (330 aa).

Asn-34 carries N-linked (GlcNAc...) asparagine glycosylation. Transmembrane regions (helical) follow at residues 105-125, 146-166, 175-192, 199-219, 237-257, 273-293, and 310-330; these read ALCVLAAYLFCGAGMVWNDWI, VTTTEAMVWMTLQVIMSWGVL, VLKHLIPVMVASVLYPFG, KLMIYPQYILAFTIAWPAIPG, CLPLCIMVFFWTIYLNTAYSY, NIAGNHIHVLLVLLVSPIILA, and NFILGVWTILACAAEVFLTSA.

It belongs to the UbiA prenyltransferase family. Requires Mg(2+) as cofactor.

The protein localises to the membrane. The protein operates within secondary metabolite biosynthesis; terpenoid biosynthesis. Its function is as follows. Polyprenyl transferase; part of the gene cluster that mediates the biosynthesis of diterpenoid pyrones. The first step of the pathway is the synthesis of the alpha-pyrone moiety by the polyketide synthase dpfgA via condensation of one acetyl-CoA starter unit with 3 malonyl-CoA units and 2 methylations. The alpha-pyrone is then combined with geranylgeranyl pyrophosphate (GGPP) formed by the GGPP synthase dpfgD through the action of the prenyltransferase dpfgC to yield a linear alpha-pyrone diterpenoid. Subsequent steps in the diterpenoid pyrone biosynthetic pathway involve the decalin core formation, which is initiated by the epoxidation of the C10-C11 olefin by the FAD-dependent oxidoreductase dpfgE, and is followed by a cyclization cascade catalyzed by the terpene cyclase dpfgB. The short chain dehydrogenase/reductase dpfgG then oxidizes the 8S hydroxy group to a ketone and the short chain dehydrogenase/reductase dpfgH reduces the ketone to the 8R hydroxy group to yield higginsianin B. Higginsianin B is further methylated by the methyltransferase dpfgI to produce the intermediate named FDDP B. The cytochrome P450 monooxygenase dfgpJ then catalyzes a three-step oxidation at C-27 to generate a carboxylic acid as well as C-26 hydroxylation. Finally, methyltransferase dpfgK methylates the carboxylic acid generated by dpfgJ, yielding the final diterpenoid pyrones from the pathway which were named FDDP D and FDDP E. In Gibberella zeae (strain ATCC MYA-4620 / CBS 123657 / FGSC 9075 / NRRL 31084 / PH-1) (Wheat head blight fungus), this protein is Polyprenyl transferase dpfgC.